A 407-amino-acid polypeptide reads, in one-letter code: 1-deoxy-D-xylulose 5-phosphate reductoisomerase (407 aa).

NADPH contacts are provided by Thr-10, Gly-11, Ser-12, Ile-13, Gly-36, and Asn-131. Lys-132 contributes to the 1-deoxy-D-xylulose 5-phosphate binding site. Residue Glu-133 participates in NADPH binding. Position 155 (Asp-155) interacts with Mn(2+). 4 residues coordinate 1-deoxy-D-xylulose 5-phosphate: Ser-156, Glu-157, Ser-181, and His-204. Glu-157 is a Mn(2+) binding site. Gly-210 serves as a coordination point for NADPH. Positions 217, 222, 223, and 226 each coordinate 1-deoxy-D-xylulose 5-phosphate. Glu-226 provides a ligand contact to Mn(2+).

The protein belongs to the DXR family. Mg(2+) serves as cofactor. Requires Mn(2+) as cofactor.

The enzyme catalyses 2-C-methyl-D-erythritol 4-phosphate + NADP(+) = 1-deoxy-D-xylulose 5-phosphate + NADPH + H(+). The protein operates within isoprenoid biosynthesis; isopentenyl diphosphate biosynthesis via DXP pathway; isopentenyl diphosphate from 1-deoxy-D-xylulose 5-phosphate: step 1/6. Its function is as follows. Catalyzes the NADPH-dependent rearrangement and reduction of 1-deoxy-D-xylulose-5-phosphate (DXP) to 2-C-methyl-D-erythritol 4-phosphate (MEP). The protein is 1-deoxy-D-xylulose 5-phosphate reductoisomerase of Cutibacterium acnes (strain DSM 16379 / KPA171202) (Propionibacterium acnes).